We begin with the raw amino-acid sequence, 66 residues long: Large ribosomal subunit protein uL29 (66 aa).

Belongs to the universal ribosomal protein uL29 family.

The protein is Large ribosomal subunit protein uL29 of Methylibium petroleiphilum (strain ATCC BAA-1232 / LMG 22953 / PM1).